The primary structure comprises 374 residues: Acid phosphatase-like protein XcAP-1 (374 aa).

The signal sequence occupies residues 1-17 (TTIILLIAFAAIQLSKA). Valine 25 provides a ligand contact to serotonin. Cystine bridges form between cysteine 144/cysteine 372, cysteine 165/cysteine 219, and cysteine 345/cysteine 349. Aspartate 245, aspartate 249, asparagine 271, and glutamine 283 together coordinate serotonin.

The protein belongs to the histidine acid phosphatase family.

The protein resides in the secreted. Its function is as follows. Probably modulates blood feeding of fleas on vertebrate species by binding and sequestering different mediators involved in the host response. Binds biogenic amines: serotonin, adrenaline and noradrenaline. Binds leukotriene C4. Does not bind histamine, leukotriene B4, leukotriene D4, leukotriene E4, ADP, and stable analogs of thromboxane A2: U-46619 and cTXA2. The polypeptide is Acid phosphatase-like protein XcAP-1 (Xenopsylla cheopis (Oriental rat flea)).